Consider the following 172-residue polypeptide: Adenine phosphoribosyltransferase (172 aa).

The protein belongs to the purine/pyrimidine phosphoribosyltransferase family. In terms of assembly, homodimer.

The protein resides in the cytoplasm. It catalyses the reaction AMP + diphosphate = 5-phospho-alpha-D-ribose 1-diphosphate + adenine. Its pathway is purine metabolism; AMP biosynthesis via salvage pathway; AMP from adenine: step 1/1. Its function is as follows. Catalyzes a salvage reaction resulting in the formation of AMP, that is energically less costly than de novo synthesis. This Desulforamulus reducens (strain ATCC BAA-1160 / DSM 100696 / MI-1) (Desulfotomaculum reducens) protein is Adenine phosphoribosyltransferase.